The primary structure comprises 591 residues: uncharacterized protein (591 aa).

Helical transmembrane passes span 389-409 (VYLG…SALI), 411-431 (GGSP…GGIL), 538-558 (GILP…FALS), and 571-591 (PIIS…FNLL).

It is found in the membrane. This is an uncharacterized protein from Mycoplasma (Bacteriophage L2).